The sequence spans 525 residues: BTB/POZ domain-containing protein 2 (525 aa).

Residues 1–86 (MAAGGSGGRA…AEEAAGPGAA (86 aa)) are disordered. Residues 16 to 26 (VGVGPGTGGSP) are compositionally biased toward gly residues. Over residues 27-55 (GPSANAAATPAPGNAAAAAAAAAAAAAAP) the composition is skewed to low complexity. A compositionally biased stretch (pro residues) spans 56 to 65 (GPTPPAPPGP). A compositionally biased stretch (low complexity) spans 66–86 (GTDAQAAGAERAEEAAGPGAA). The 71-residue stretch at 117 to 187 (CDVHFLVGKG…LYSDEVQIGP (71 aa)) folds into the BTB domain.

Interacts with topoisomerase 1 and with TRIM5 isoform Delta.

Its subcellular location is the cytoplasm. This chain is BTB/POZ domain-containing protein 2 (BTBD2), found in Homo sapiens (Human).